The primary structure comprises 565 residues: Oxygen-dependent choline dehydrogenase (565 aa).

7–36 (DYIICGAGSAGNVLATRLTEDPGVTVLLLE) is an FAD binding site. Residue H474 is the Proton acceptor of the active site.

Belongs to the GMC oxidoreductase family. FAD serves as cofactor.

The catalysed reaction is choline + A = betaine aldehyde + AH2. The enzyme catalyses betaine aldehyde + NAD(+) + H2O = glycine betaine + NADH + 2 H(+). Its pathway is amine and polyamine biosynthesis; betaine biosynthesis via choline pathway; betaine aldehyde from choline (cytochrome c reductase route): step 1/1. In terms of biological role, involved in the biosynthesis of the osmoprotectant glycine betaine. Catalyzes the oxidation of choline to betaine aldehyde and betaine aldehyde to glycine betaine at the same rate. The protein is Oxygen-dependent choline dehydrogenase of Burkholderia pseudomallei (strain K96243).